A 342-amino-acid chain; its full sequence is Transmembrane protein HWLF3 (342 aa).

The tract at residues 21-64 is disordered; the sequence is PCSTSCPPSPAAPTLLRRRSLPQQRRRPSSSPNRRVRGVTTSPC. Basic residues predominate over residues 36–48; the sequence is LRRRSLPQQRRRP. A helical transmembrane segment spans residues 119–139; the sequence is AIFIFQLAFSFGLGSVFWLGF. The N-linked (GlcNAc...) asparagine; by host glycan is linked to asparagine 149. Residues 150–170 traverse the membrane as a helical segment; it reads YSFFLTVLVPIVCMFITYTLG. An N-linked (GlcNAc...) asparagine; by host glycan is attached at asparagine 176. 5 helical membrane-spanning segments follow: residues 177-197, 202-222, 231-251, 266-286, and 296-316; these read ATVL…FQMC, VLVG…GLAF, WKCI…LALL, AFSI…VIFF, and AVCL…MLSG. Residue asparagine 330 is glycosylated (N-linked (GlcNAc...) asparagine; by host).

The protein belongs to the cytomegalovirus US12 family.

It localises to the membrane. In Human cytomegalovirus (strain Towne) (HHV-5), this protein is Transmembrane protein HWLF3 (US20).